The sequence spans 628 residues: Kelch-like protein diablo (628 aa).

A disordered region spans residues 1-56; it reads MGDLPGSTGGGSGPAAAGNASGNSSSAGNTGLGVAGTTGVDRPPSPARLSHTSEKH. The segment covering 14-29 has biased composition (low complexity); the sequence is PAAAGNASGNSSSAGN. The BTB domain maps to 74–141; the sequence is CDVVLNVGGR…CYTAHIIVEE (68 aa). Positions 176-278 constitute a BACK domain; that stretch reads CLGIRAFADT…SPKFLVGTVG (103 aa). 6 Kelch repeats span residues 325–371, 373–419, 420–466, 468–513, 515–560, and 561–607; these read VLFA…VLND, LYAV…VLDG, FLYA…VLGG, LYAI…VFNN, IYAV…VVNG, and QLYA…VMRA.

It participates in protein modification; protein ubiquitination. Its function is as follows. Probable substrate-specific adapter of an E3 ubiquitin-protein ligase complex which mediates the ubiquitination and subsequent proteasomal degradation of target proteins. May have a role in synapse differentiation and growth. This is Kelch-like protein diablo from Drosophila persimilis (Fruit fly).